A 137-amino-acid chain; its full sequence is Peptide methionine sulfoxide reductase MsrB (137 aa).

The MsrB domain occupies 7–129 (AEELKKNLSE…NSASLRFTDG (123 aa)). The Zn(2+) site is built by C46, C49, C95, and C98. The active-site Nucleophile is the C118.

The protein belongs to the MsrB Met sulfoxide reductase family. The cofactor is Zn(2+).

The enzyme catalyses L-methionyl-[protein] + [thioredoxin]-disulfide + H2O = L-methionyl-(R)-S-oxide-[protein] + [thioredoxin]-dithiol. The sequence is that of Peptide methionine sulfoxide reductase MsrB from Escherichia coli O45:K1 (strain S88 / ExPEC).